Here is a 440-residue protein sequence, read N- to C-terminus: 2-alpha-hydroxytaxane 2-O-benzoyltransferase (440 aa).

Catalysis depends on proton acceptor residues H158 and D367.

It belongs to the plant acyltransferase family.

The catalysed reaction is 10-deacetyl-2-debenzoylbaccatin III + benzoyl-CoA = 10-deacetylbaccatin III + CoA. The protein operates within alkaloid biosynthesis; taxol biosynthesis; baccatin III from 10-deacetyl-2-debenzoylbaccatin III: step 1/2. Functionally, catalyzes the conversion of 2-debenzoyl-7,13-diacetylbaccatin III, a semisynthetic substrate, to 7,13-diacetylbaccatin III. The sequence is that of 2-alpha-hydroxytaxane 2-O-benzoyltransferase from Taxus cuspidata (Japanese yew).